The chain runs to 341 residues: tRNA N6-adenosine threonylcarbamoyltransferase (341 aa).

Histidine 116 and histidine 120 together coordinate Fe cation. Substrate is bound by residues 139-143 (LVSGG), aspartate 172, glycine 185, and asparagine 274. A Fe cation-binding site is contributed by aspartate 302.

Belongs to the KAE1 / TsaD family. Requires Fe(2+) as cofactor.

It is found in the cytoplasm. The catalysed reaction is L-threonylcarbamoyladenylate + adenosine(37) in tRNA = N(6)-L-threonylcarbamoyladenosine(37) in tRNA + AMP + H(+). In terms of biological role, required for the formation of a threonylcarbamoyl group on adenosine at position 37 (t(6)A37) in tRNAs that read codons beginning with adenine. Is involved in the transfer of the threonylcarbamoyl moiety of threonylcarbamoyl-AMP (TC-AMP) to the N6 group of A37, together with TsaE and TsaB. TsaD likely plays a direct catalytic role in this reaction. The polypeptide is tRNA N6-adenosine threonylcarbamoyltransferase (Vesicomyosocius okutanii subsp. Calyptogena okutanii (strain HA)).